Consider the following 932-residue polypeptide: UPF0182 protein Syncc9902_1151 (932 aa).

The next 9 membrane-spanning stretches (helical) occupy residues 4–24 (FLWILLPPVLVVVARMHVEWV), 40–60 (MLQLLFAGAGSIPVFLAVLWL), 85–105 (VLMVSGLAFLACSVVLSDLAI), 124–144 (MASEWKALLPIQLAIAGVSLC), 151–171 (WVAVAMGFALVLVVSRAWGVW), 201–221 (IQLGLELLVLSGTFTTAHAVW), 243–263 (YRWLSIGVGTNLLGVAGLVWL), 293–313 (LLAFVLLVLGVSCIVRGIGHL), and 315–335 (RLLLLCVAAIVIIESTLTPLT).

The protein belongs to the UPF0182 family.

Its subcellular location is the cell membrane. This is UPF0182 protein Syncc9902_1151 from Synechococcus sp. (strain CC9902).